The following is a 737-amino-acid chain: Protein kinase C epsilon type (737 aa).

Positions 1 to 117 constitute a C2 domain; that stretch reads MVVFNGLLKI…NGSRHFEDWI (117 aa). A Phosphoserine modification is found at S62. A Phorbol-ester/DAG-type 1 zinc finger spans residues 169–220; the sequence is GHKFMATYLRQPTYCSHCRDFIWGVIGKQGYQCQVCTCVVHKRCHELIITKC. The Interaction with actin motif lies at 223-228; sequence LKKQET. Position 228 is a phosphothreonine (T228). S234 carries the post-translational modification Phosphoserine. The Phorbol-ester/DAG-type 2 zinc-finger motif lies at 242-292; that stretch reads PHKFGIHNYKVPTFCDHCGSLLWGLLRQGLQCKVCKMNVHRRCETNVAPNC. T309 is modified (phosphothreonine). The tract at residues 310 to 356 is disordered; sequence PDKITNSGQRRKKLAAGAESPQPASGNSPSEDDRSKSAPTSPCDQEL. Phosphoserine is present on residues S316, S329, S337, and S346. Residue T349 is modified to Phosphothreonine. Phosphoserine; by MAPK11 and MAPK14 is present on S350. 2 positions are modified to phosphoserine: S368 and S388. The disordered stretch occupies residues 369-398; that stretch reads FDNRGEEHRASSSTDGQLASPGENGEVRQG. The Protein kinase domain maps to 408-668; that stretch reads FNFIKVLGKG…EDAIKQHPFF (261 aa). Residues 414-422 and K437 contribute to the ATP site; that span reads LGKGSFGKV. The Proton acceptor role is filled by D532. Residue T566 is modified to Phosphothreonine; by PDPK1. Residues 669–737 enclose the AGC-kinase C-terminal domain; that stretch reads KEIDWVLLEQ…FSYFGEDLMP (69 aa). 2 positions are modified to phosphothreonine: T703 and T710. Position 729 is a phosphoserine (S729).

It belongs to the protein kinase superfamily. AGC Ser/Thr protein kinase family. PKC subfamily. Forms a ternary complex with TRIM63 and RACK1/GN2BL1. Can form a complex with PDLIM5 and N-type calcium channel. Interacts with COPB1. Interacts with DGKQ. Interacts with STAT3. Interacts with YWHAB. Interacts with HSP90AB1; promotes functional activation in a heat shock-dependent manner. Interacts (via phorbol-ester/DAG-type 2 domain) with PRPH and VIM. Interacts with NLRP5/MATER. Phosphorylation on Thr-566 by PDPK1 triggers autophosphorylation on Ser-729. Phosphorylation in the hinge domain at Ser-350 by MAPK11 or MAPK14, Ser-346 by GSK3B and Ser-368 by autophosphorylation is required for interaction with YWHAB. In response to growth factors, phosphorylated at Thr-703 and Ser-729 by the mTORC2 complex, promoting autophosphorylation and activation of PRKCE.

Its subcellular location is the cytoplasm. The protein localises to the cytoskeleton. The protein resides in the cell membrane. It localises to the perinuclear region. It is found in the nucleus. The catalysed reaction is L-seryl-[protein] + ATP = O-phospho-L-seryl-[protein] + ADP + H(+). It carries out the reaction L-threonyl-[protein] + ATP = O-phospho-L-threonyl-[protein] + ADP + H(+). With respect to regulation, novel PKCs (PRKCD, PRKCE, PRKCH and PRKCQ) are calcium-insensitive, but activated by diacylglycerol (DAG) and phosphatidylserine. Three specific sites; Thr-566 (activation loop of the kinase domain), Thr-710 (turn motif) and Ser-729 (hydrophobic region), need to be phosphorylated for its full activation. In terms of biological role, calcium-independent, phospholipid- and diacylglycerol (DAG)-dependent serine/threonine-protein kinase that plays essential roles in the regulation of multiple cellular processes linked to cytoskeletal proteins, such as cell adhesion, motility, migration and cell cycle, functions in neuron growth and ion channel regulation, and is involved in immune response, cancer cell invasion and regulation of apoptosis. Mediates cell adhesion to the extracellular matrix via integrin-dependent signaling, by mediating angiotensin-2-induced activation of integrin beta-1 (ITGB1) in cardiac fibroblasts. Phosphorylates MARCKS, which phosphorylates and activates PTK2/FAK, leading to the spread of cardiomyocytes. Involved in the control of the directional transport of ITGB1 in mesenchymal cells by phosphorylating vimentin (VIM), an intermediate filament (IF) protein. In epithelial cells, associates with and phosphorylates keratin-8 (KRT8), which induces targeting of desmoplakin at desmosomes and regulates cell-cell contact. Phosphorylates IQGAP1, which binds to CDC42, mediating epithelial cell-cell detachment prior to migration. During cytokinesis, forms a complex with YWHAB, which is crucial for daughter cell separation, and facilitates abscission by a mechanism which may implicate the regulation of RHOA. In cardiac myocytes, regulates myofilament function and excitation coupling at the Z-lines, where it is indirectly associated with F-actin via interaction with COPB1. During endothelin-induced cardiomyocyte hypertrophy, mediates activation of PTK2/FAK, which is critical for cardiomyocyte survival and regulation of sarcomere length. Plays a role in the pathogenesis of dilated cardiomyopathy via persistent phosphorylation of troponin I (TNNI3). Involved in nerve growth factor (NFG)-induced neurite outgrowth and neuron morphological change independently of its kinase activity, by inhibition of RHOA pathway, activation of CDC42 and cytoskeletal rearrangement. May be involved in presynaptic facilitation by mediating phorbol ester-induced synaptic potentiation. Phosphorylates gamma-aminobutyric acid receptor subunit gamma-2 (GABRG2), which reduces the response of GABA receptors to ethanol and benzodiazepines and may mediate acute tolerance to the intoxicating effects of ethanol. Upon PMA treatment, phosphorylates the capsaicin- and heat-activated cation channel TRPV1, which is required for bradykinin-induced sensitization of the heat response in nociceptive neurons. Is able to form a complex with PDLIM5 and N-type calcium channel, and may enhance channel activities and potentiates fast synaptic transmission by phosphorylating the pore-forming alpha subunit CACNA1B (CaV2.2). Downstream of TLR4, plays an important role in the lipopolysaccharide (LPS)-induced immune response by phosphorylating and activating TICAM2/TRAM, which in turn activates the transcription factor IRF3 and subsequent cytokines production. In differentiating erythroid progenitors, is regulated by EPO and controls the protection against the TNFSF10/TRAIL-mediated apoptosis, via BCL2. May be involved in the regulation of the insulin-induced phosphorylation and activation of AKT1. Phosphorylates NLRP5/MATER and may thereby modulate AKT pathway activation in cumulus cells. Phosphorylates and activates LRRK1, which phosphorylates RAB proteins involved in intracellular trafficking. The protein is Protein kinase C epsilon type (Prkce) of Rattus norvegicus (Rat).